The following is a 411-amino-acid chain: Adherens junction-associated protein 1 (411 aa).

The first 43 residues, 1 to 43 (MWIQQLLGLSSMSIRWPGRPLGSHAWILIAMFQLAVDLPACEA), serve as a signal peptide directing secretion. Residues 44–282 (LGPGPEFWLL…GEASGLAVHQ (239 aa)) lie on the Extracellular side of the membrane. Disordered stretches follow at residues 89-108 (IHGQMQMPRARRAHRPRDQA), 115-197 (AGLA…SNTF), and 239-268 (SLDPRRRIPGGVSTTEPSTSPSNNGEVTQP). Positions 115-146 (AGLAKPPAAAKSSPSLASSSSSSSSAVAGGAP) are enriched in low complexity. Residues 166 to 178 (SFDSRGSRPTTET) are compositionally biased toward polar residues. Low complexity predominate over residues 247–263 (PGGVSTTEPSTSPSNNG). Residues 283–303 (IITITVSLIMVIAALITTLVL) form a helical membrane-spanning segment. A targeting signals region spans residues 303-411 (LKNCCAQSGN…VSEKWFEISC (109 aa)). The Cytoplasmic portion of the chain corresponds to 304–411 (KNCCAQSGNT…VSEKWFEISC (108 aa)). The segment at 311-330 (GNTRRNSHQRKTNQQEESCQ) is disordered.

In terms of assembly, forms a complex with CDH1 and CTNNB1; interacts directly with CTNNB1. Interacts with AP1M2. Interacts with isoform 2 of BSG/CD147. Thr-237 and Ser-239 may be phosphorylated; however as this position is probably extracellular, the in vivo relevance is not proven. As to expression, expressed in uterus and pancreas (at protein level).

It is found in the basolateral cell membrane. The protein resides in the apical cell membrane. The protein localises to the cell junction. It localises to the adherens junction. In terms of biological role, plays a role in cell adhesion and cell migration. The chain is Adherens junction-associated protein 1 (AJAP1) from Homo sapiens (Human).